Reading from the N-terminus, the 125-residue chain is Large ribosomal subunit protein bL12 (125 aa).

It belongs to the bacterial ribosomal protein bL12 family. Homodimer. Part of the ribosomal stalk of the 50S ribosomal subunit. Forms a multimeric L10(L12)X complex, where L10 forms an elongated spine to which 2 to 4 L12 dimers bind in a sequential fashion. Binds GTP-bound translation factors.

Functionally, forms part of the ribosomal stalk which helps the ribosome interact with GTP-bound translation factors. Is thus essential for accurate translation. In Campylobacter jejuni subsp. jejuni serotype O:6 (strain 81116 / NCTC 11828), this protein is Large ribosomal subunit protein bL12.